The chain runs to 1700 residues: Rho guanine nucleotide exchange factor 28 (1700 aa).

The interval 288-335 (TERATMPSGAAETEEEVRNLESGRSPSEEEEDGQLVKSQADGPSEQED) is disordered. Ser-312, Ser-314, and Ser-478 each carry phosphoserine. Residues 483–525 (VADSEEEGRSEPPICYAVGSQSSPRTGLPGGDELDSFDANTEP) are disordered. Ser-623 is subject to Phosphoserine. The segment at 651-698 (RHQFVPGTFSGVLQCSGCDKTLLGKESLQCANCKANTHKGCKDTVPPC) adopts a Phorbol-ester/DAG-type zinc-finger fold. Residues 709 to 720 (NKPQTILGSSSV) are compositionally biased toward polar residues. 2 disordered regions span residues 709–761 (NKPQ…VPGT) and 774–799 (ESEG…GSSP). Positions 728-737 (LSLHPSPSMP) are enriched in low complexity. A compositionally biased stretch (polar residues) spans 774 to 783 (ESEGDSNSWR). In terms of domain architecture, DH spans 848-1043 (KRQDVIFELM…KDMIAAVDLK (196 aa)). The PH domain maps to 1085-1187 (ALLHDGLVYW…WMRRIQQAVE (103 aa)). Positions 1186–1207 (VESCPEEEGGRTSESDEERRKA) are disordered. Residues 1193–1207 (EGGRTSESDEERRKA) show a composition bias toward basic and acidic residues. Residues 1294–1303 (DVSQPSEEGP) are interaction with PTK2/FAK1; required for regulation of axonal branching and synapse formation. The interval 1369-1380 (IIQAIQNLTRLL) is mediates cytoplasmic retention and interaction with YWHAH. The interval 1421 to 1700 (QEKSRYLEKH…DGAEENIVYL (280 aa)) is interaction with microtubules. The stretch at 1473-1522 (ERECQSQEELLLRHRSELDHQLQEYQQNLERLREGQRMVERERQRMRDQQ) forms a coiled coil. The tract at residues 1493-1524 (QLQEYQQNLERLREGQRMVERERQRMRDQQGL) is RNA-binding. A Phosphoserine modification is found at Ser-1535. The segment at 1563 to 1576 (FLNDAFTHMSLNTS) is mediates cytoplasmic retention and interaction with MAPK8IP1. The segment at 1574 to 1598 (NTSNKPNPSGAPWDAHPPGGSHLDL) is disordered. Residue Ser-1604 is modified to Phosphoserine. The segment at 1612 to 1700 (VSQPSDVNSE…DGAEENIVYL (89 aa)) is disordered. Polar residues predominate over residues 1613 to 1623 (SQPSDVNSELW). Basic and acidic residues predominate over residues 1633–1642 (ARQESIKDSC). The span at 1647 to 1672 (DLNSFQTESPDPQDSNQRGPQPQTLI) shows a compositional bias: polar residues.

In terms of assembly, homooligomer; forms cytoplasmic aggregates. Forms a complex with MAPK8 and MAPK8IP1. Interacts with RHOA. Interacts with microtubules. Interacts with YWHAE and YWHAH. Interacts with PTK2/FAK1. Interacts with NEFL. Interacts with CTNND2; prevents interaction with RHOA. Phosphorylated on tyrosine upon stimulation of cells by laminin.

Its subcellular location is the cytoplasm. It localises to the cell membrane. In terms of biological role, functions as a RHOA-specific guanine nucleotide exchange factor regulating signaling pathways downstream of integrins and growth factor receptors. Functions in axonal branching, synapse formation and dendritic morphogenesis. Also functions in focal adhesion formation, cell motility and B-lymphocytes activation. May regulate NEFL expression and aggregation and play a role in apoptosis. This chain is Rho guanine nucleotide exchange factor 28 (Arhgef28), found in Rattus norvegicus (Rat).